Consider the following 41-residue polypeptide: Trypsin inhibitor 2c (41 aa).

2 disulfide bridges follow: cysteine 11–cysteine 32 and cysteine 15–cysteine 28.

In terms of biological role, inhibits bovine trypsin with a Ki of 0.174 nM and trypsin-like proteases from G.mellonella larvae. Has no activity against serine proteases chymotrypsin, subtilisin and elastase. Has no activity against cysteine proteases from beetle gut. In Fagopyrum esculentum (Common buckwheat), this protein is Trypsin inhibitor 2c.